A 638-amino-acid polypeptide reads, in one-letter code: Pentatricopeptide repeat-containing protein At3g49730 (638 aa).

PPR repeat units follow at residues 130-164 (SYEV…NPEL), 166-200 (EPEL…GLEP), 201-231 (DEYV…MREK), 235-269 (NLRY…GLEP), 270-304 (DIVV…GFEP), 305-340 (NVNC…GCEA), 341-375 (DIVT…GVMP), 376-410 (SQVT…GCHP), 411-445 (DLLI…GLSP), 446-480 (GVDT…GIFS), 483-513 (QYGT…ISNK), and 520-554 (NVSA…DLMP). The tract at residues 604–638 (LIEKAKPKGNKEGKKKGTDHQRYKGRGERSRAKAL) is disordered.

This sequence belongs to the PPR family. P subfamily.

The sequence is that of Pentatricopeptide repeat-containing protein At3g49730 from Arabidopsis thaliana (Mouse-ear cress).